The following is a 103-amino-acid chain: Small ribosomal subunit protein uS10 (103 aa).

It belongs to the universal ribosomal protein uS10 family. Part of the 30S ribosomal subunit.

In terms of biological role, involved in the binding of tRNA to the ribosomes. The protein is Small ribosomal subunit protein uS10 of Saccharophagus degradans (strain 2-40 / ATCC 43961 / DSM 17024).